Reading from the N-terminus, the 224-residue chain is LexA repressor (224 aa).

The segment at residues 31–51 (RAEIAAEFGFKSANAAEEHLQ) is a DNA-binding region (H-T-H motif). Active-site for autocatalytic cleavage activity residues include S142 and K179.

It belongs to the peptidase S24 family. As to quaternary structure, homodimer.

It catalyses the reaction Hydrolysis of Ala-|-Gly bond in repressor LexA.. In terms of biological role, represses a number of genes involved in the response to DNA damage (SOS response), including recA and lexA. In the presence of single-stranded DNA, RecA interacts with LexA causing an autocatalytic cleavage which disrupts the DNA-binding part of LexA, leading to derepression of the SOS regulon and eventually DNA repair. The polypeptide is LexA repressor (Paracidovorax citrulli (strain AAC00-1) (Acidovorax citrulli)).